The primary structure comprises 493 residues: Proline--tRNA ligase (493 aa).

This sequence belongs to the class-II aminoacyl-tRNA synthetase family. ProS type 3 subfamily. Homodimer.

It is found in the cytoplasm. The catalysed reaction is tRNA(Pro) + L-proline + ATP = L-prolyl-tRNA(Pro) + AMP + diphosphate. Functionally, catalyzes the attachment of proline to tRNA(Pro) in a two-step reaction: proline is first activated by ATP to form Pro-AMP and then transferred to the acceptor end of tRNA(Pro). The sequence is that of Proline--tRNA ligase from Azobacteroides pseudotrichonymphae genomovar. CFP2.